The chain runs to 232 residues: Orotidine 5'-phosphate decarboxylase (232 aa).

Residues aspartate 11, lysine 33, 60–69 (DLKLYDIPNT), threonine 119, arginine 180, glutamine 189, glycine 209, and arginine 210 each bind substrate. Lysine 62 acts as the Proton donor in catalysis.

It belongs to the OMP decarboxylase family. Type 1 subfamily. Homodimer.

The catalysed reaction is orotidine 5'-phosphate + H(+) = UMP + CO2. It functions in the pathway pyrimidine metabolism; UMP biosynthesis via de novo pathway; UMP from orotate: step 2/2. In terms of biological role, catalyzes the decarboxylation of orotidine 5'-monophosphate (OMP) to uridine 5'-monophosphate (UMP). The chain is Orotidine 5'-phosphate decarboxylase from Wigglesworthia glossinidia brevipalpis.